Here is a 188-residue protein sequence, read N- to C-terminus: Inosine triphosphate pyrophosphatase (188 aa).

11 to 16 lines the ITP pocket; it reads TGNKHK. Residue E39 coordinates Mg(2+). Residues K51, 67–68, K84, 143–146, and 171–172 each bind ITP; these read DT, FGWN, and HR.

This sequence belongs to the HAM1 NTPase family. Homodimer. Mg(2+) is required as a cofactor. Mn(2+) serves as cofactor.

It is found in the cytoplasm. It localises to the nucleus. The enzyme catalyses ITP + H2O = IMP + diphosphate + H(+). It carries out the reaction dITP + H2O = dIMP + diphosphate + H(+). It catalyses the reaction XTP + H2O = XMP + diphosphate + H(+). Functionally, pyrophosphatase that hydrolyzes non-canonical purine nucleotides such as inosine triphosphate (ITP), deoxyinosine triphosphate (dITP) or xanthosine 5'-triphosphate (XTP) to their respective monophosphate derivatives. The enzyme does not distinguish between the deoxy- and ribose forms. Probably excludes non-canonical purines from RNA and DNA precursor pools, thus preventing their incorporation into RNA and DNA and avoiding chromosomal lesions. This is Inosine triphosphate pyrophosphatase from Schizosaccharomyces pombe (strain 972 / ATCC 24843) (Fission yeast).